Consider the following 241-residue polypeptide: Fatty acid metabolism regulator protein (241 aa).

The 69-residue stretch at Lys-6–Phe-74 folds into the HTH gntR-type domain. Positions Glu-34–Gln-53 form a DNA-binding region, H-T-H motif.

Homodimer.

It localises to the cytoplasm. Functionally, multifunctional regulator of fatty acid metabolism. This is Fatty acid metabolism regulator protein from Shewanella sp. (strain ANA-3).